We begin with the raw amino-acid sequence, 307 residues long: E3 ubiquitin-protein ligase PHF7 (307 aa).

Residues Ser-30 to Leu-68 form a C2HC pre-PHD-type zinc finger. Zn(2+) is bound by residues Cys-33, Cys-36, His-58, and Cys-61. Positions Arg-67–Arg-92 are required for interaction and ubiquitination of the nucleosome core particle. The segment at Lys-96 to Arg-145 adopts a PHD-type zinc-finger fold. Residues Cys-98, Cys-101, Cys-110, Cys-115, His-120, Cys-123, Cys-141, His-144, Cys-160, Cys-163, Cys-179, Cys-180, His-186, Cys-189, Cys-204, Cys-207, Cys-248, Cys-253, Cys-273, Cys-276, His-282, Cys-285, Cys-297, and Cys-300 each contribute to the Zn(2+) site. A required for interaction with ubiquitinated UBE2D2 region spans residues Ile-150 to Ser-307. Residues Cys-160 to Asn-208 form an RING-type; degenerate zinc finger. Residues Arg-244–Leu-301 form a required for association with and ubiquitination of H3 region.

In terms of assembly, interacts with MEF2C; the interaction promotes MEF2C binding to its transcription targets. Interacts with GATA4; the interaction promotes GATA4 binding to its transcription targets. Interacts with UBE2D2; the interaction inhibits cleavage of PHF7 and promotes association of the complex with the nucleosome core particle. As to expression, expressed in Leydig cells and in developing spermatids (at protein level). Highly expressed in Sertoli cells in testis.

Its subcellular location is the nucleus. It catalyses the reaction S-ubiquitinyl-[E2 ubiquitin-conjugating enzyme]-L-cysteine + [acceptor protein]-L-lysine = [E2 ubiquitin-conjugating enzyme]-L-cysteine + N(6)-ubiquitinyl-[acceptor protein]-L-lysine.. It participates in protein modification; protein ubiquitination. E3 ubiquitin-protein ligase which ubiquitinates histone H3 at 'Lys-14'. Required for male fertility, via inhibition of SPOP-mediated BRDT degradation when in the presence of acetylated histone H4 in early condensing spermatids. Stabilization of BRDT allows it to facilitate histone removal in early condensing spermatids and promote the progression of histone-to-protamine exchange. Promotes the expression of steroidogenesis proteins in the testes, and as a result plays a role in maintaining testosterone levels and repressing osteoclastogenesis. Promotes transcription of cardiac enhancer genes by facilitating binding of cardiac transcription factors such as MEF2C and GATA4 to target gene promoters. Ubiquitinates histone H4. Ubiquitinates histone H2A and H3 as part of the nucleosome core particle. The polypeptide is E3 ubiquitin-protein ligase PHF7 (Mus musculus (Mouse)).